Consider the following 95-residue polypeptide: RING finger protein Z (95 aa).

The span at 1-17 shows a compositional bias: polar residues; it reads MGNCNRTQKPSSSSNNL. The tract at residues 1 to 25 is disordered; sequence MGNCNRTQKPSSSSNNLEKPPQAAE. Gly2 is lipidated: N-myristoyl glycine; by host. The RING-type; atypical zinc-finger motif lies at 40–76; it reads CKCCWFADKNLITCSDHYLCLRCHQIMLRNSELCNIC. The ASAP motif motif lies at 90-93; sequence ASAP.

It belongs to the arenaviridae Z protein family. As to quaternary structure, interacts with protein NP; this interaction probably directs the encapsidated genome to budding sites. Interacts (via RING domain) with polymerase L; this interaction inhibits viral transcription and replication, Z partially blocks the product exit tunnel for the releasing nascent RNA product. Interacts with the glycoprotein complex; this interaction plays a role in virion budding. Interacts with host eIF4E; this interaction results in eIF4E reduced affinity for its substrate, the 5'-m7 G cap structure. Interacts (via late-budding domain) with host TSG101; this interaction is essential for budding and release of viral particles. Interacts with host RPLP0; this interaction may serve to load ribosome-like particles inside the virion. Interacts with host PML; this interaction induces PML bodies redistribution in the cytoplasm upon viral infection. Post-translationally, myristoylation is required for the role of RING finger protein Z in assembly and budding.

The protein localises to the virion. It is found in the host cytoplasm. The protein resides in the host perinuclear region. It localises to the host cell membrane. In terms of biological role, plays a crucial role in virion assembly and budding. Expressed late in the virus life cycle, it acts as an inhibitor of viral transcription and RNA synthesis by interacting with the viral polymerase L. Presumably recruits the NP encapsidated genome to cellular membranes at budding sites via direct interaction with NP. Plays critical roles in the final steps of viral release by interacting with host TSG101, a member of the vacuolar protein-sorting pathway and using other cellular host proteins involved in vesicle formation pathway. The budding of the virus progeny occurs after association of protein Z with the viral glycoprotein complex SSP-GP1-GP2 at the cell periphery, step that requires myristoylation of protein Z. Also selectively represses protein production by associating with host eIF4E. In cell-based minigenome assay, has an inhibitory effect on the ribonucleoprotein machinery (vRNP), which is responsible for the replication and transcription of the viral genome. This Tacaribe virus (strain Franze-Fernandez) (TCRV) protein is RING finger protein Z.